We begin with the raw amino-acid sequence, 251 residues long: Flap endonuclease Xni (251 aa).

Position 104 (Asp104) interacts with Mg(2+). Residues 160-249 enclose the 5'-3' exonuclease domain; the sequence is VLPRQLPDYW…IDGNLQQLRL (90 aa). Residues Leu171, Ala172, Pro180, Val182, and Ile185 each contribute to the K(+) site. The interval 184-189 is interaction with DNA; the sequence is GIGPKS.

The protein belongs to the Xni family. Requires Mg(2+) as cofactor. It depends on K(+) as a cofactor.

In terms of biological role, has flap endonuclease activity. During DNA replication, flap endonucleases cleave the 5'-overhanging flap structure that is generated by displacement synthesis when DNA polymerase encounters the 5'-end of a downstream Okazaki fragment. The polypeptide is Flap endonuclease Xni (Salmonella typhimurium (strain LT2 / SGSC1412 / ATCC 700720)).